Here is a 569-residue protein sequence, read N- to C-terminus: Formate--tetrahydrofolate ligase (569 aa).

64 to 71 is a binding site for ATP; sequence TPHGEGKT.

It belongs to the formate--tetrahydrofolate ligase family.

The enzyme catalyses (6S)-5,6,7,8-tetrahydrofolate + formate + ATP = (6R)-10-formyltetrahydrofolate + ADP + phosphate. The protein operates within one-carbon metabolism; tetrahydrofolate interconversion. The polypeptide is Formate--tetrahydrofolate ligase (Shewanella sp. (strain MR-7)).